Consider the following 387-residue polypeptide: Mannitol-1-phosphate 5-dehydrogenase (387 aa).

An NAD(+)-binding site is contributed by 3-14 (ALHFGAGNIGRG).

Belongs to the mannitol dehydrogenase family.

It catalyses the reaction D-mannitol 1-phosphate + NAD(+) = beta-D-fructose 6-phosphate + NADH + H(+). The sequence is that of Mannitol-1-phosphate 5-dehydrogenase from Yersinia pseudotuberculosis serotype O:1b (strain IP 31758).